Consider the following 503-residue polypeptide: ATP synthase subunit beta (503 aa).

Position 157-164 (157-164 (GGAGVGKT)) interacts with ATP.

The protein belongs to the ATPase alpha/beta chains family. As to quaternary structure, F-type ATPases have 2 components, CF(1) - the catalytic core - and CF(0) - the membrane proton channel. CF(1) has five subunits: alpha(3), beta(3), gamma(1), delta(1), epsilon(1). CF(0) has three main subunits: a(1), b(2) and c(9-12). The alpha and beta chains form an alternating ring which encloses part of the gamma chain. CF(1) is attached to CF(0) by a central stalk formed by the gamma and epsilon chains, while a peripheral stalk is formed by the delta and b chains.

The protein resides in the cell inner membrane. It catalyses the reaction ATP + H2O + 4 H(+)(in) = ADP + phosphate + 5 H(+)(out). Its function is as follows. Produces ATP from ADP in the presence of a proton gradient across the membrane. The catalytic sites are hosted primarily by the beta subunits. In Flavobacterium johnsoniae (strain ATCC 17061 / DSM 2064 / JCM 8514 / BCRC 14874 / CCUG 350202 / NBRC 14942 / NCIMB 11054 / UW101) (Cytophaga johnsonae), this protein is ATP synthase subunit beta.